The following is a 619-amino-acid chain: Xyloglucan galactosyltransferase MUR3 (619 aa).

Positions 1–26 are disordered; that stretch reads MFPRVSMRRRSAEVSPTEPMEKGNGK. Residues 1–33 are Cytoplasmic-facing; sequence MFPRVSMRRRSAEVSPTEPMEKGNGKNQTNRIC. A helical; Signal-anchor for type II membrane protein membrane pass occupies residues 34-54; the sequence is LLVALSLFFWALLLYFHFVVL. Topologically, residues 55-619 are lumenal; it reads GTSNIDKQLQ…WKSEQRDKTQ (565 aa). N-linked (GlcNAc...) asparagine glycosylation is found at asparagine 116, asparagine 146, asparagine 231, asparagine 257, asparagine 319, asparagine 465, and asparagine 482. The disordered stretch occupies residues 576 to 619; that stretch reads HVWDPFFSKPKPGEDGSSDGNGGTTISADAAKNSWKSEQRDKTQ. Residues 610–619 are compositionally biased toward basic and acidic residues; sequence WKSEQRDKTQ.

The protein belongs to the glycosyltransferase 47 family. Interacts with CSLC4 and FUT1. As to expression, ubiquitous.

It is found in the golgi apparatus. Its subcellular location is the golgi stack membrane. It localises to the golgi apparatus membrane. In terms of biological role, involved in the attachment of the Gal residue on the third xylosyl unit within the XXXG core structure of xyloglucan, the principal glycan that interlaces the cellulose microfibrils in plant cell wall. Associates with other xyloglucan-synthesizing enzymes to form multiprotein complexes for xyloglucan synthesis in the Golgi. Interacts with actin and is required for the proper endomembrane organization and for the cell elongation. Not involved in the trafficking from the endoplasmic reticulum to the vacuoles. Involved in salt stress tolerance. Participates in the control of the expression of genes encoding for proteins involved in reactive oxygen species (ROS) detoxification under salt stress. May contribute to the maintenance of the proper organization of actin microfilaments during salt stress-induced ROS production. The protein is Xyloglucan galactosyltransferase MUR3 of Arabidopsis thaliana (Mouse-ear cress).